A 511-amino-acid chain; its full sequence is 4,4'-diapophytoene desaturase (4,4'-diapolycopene-forming) (511 aa).

It belongs to the carotenoid/retinoid oxidoreductase family.

It catalyses the reaction 15-cis-4,4'-diapophytoene + 4 FAD + 4 H(+) = all-trans-4,4'-diapolycopene + 4 FADH2. It participates in carotenoid biosynthesis. Functionally, involved in the biosynthesis of C30 carotenoids. Catalyzes four successive dehydrogenation reactions that lead to the introduction of four double bonds into 4,4'-diapophytoene (dehydrosqualene) to yield 4,4'-diapolycopene. The sequence is that of 4,4'-diapophytoene desaturase (4,4'-diapolycopene-forming) from Methylomonas sp.